The chain runs to 519 residues: Probable pectinesterase/pectinesterase inhibitor 36 (519 aa).

Residues 1–25 (MSTFVKVTDLITIMFFLAIAAVITA) form the signal peptide. The segment at 27–141 (NTAELDVLEM…TFVLHEALAF (115 aa)) is pectinesterase inhibitor 36. N-linked (GlcNAc...) asparagine glycans are attached at residues Asn-92 and Asn-130. Residues 147–196 (GHMKKRLHGPARQGHGPTRPKHRPTRPNHGPGRSHHGPSRPNQNGGMLVS) are disordered. Basic residues predominate over residues 164–184 (TRPKHRPTRPNHGPGRSHHGP). A compositionally biased stretch (polar residues) spans 186–196 (RPNQNGGMLVS). Residues 205–505 (DFVVARDGSA…FTVSRFIQGD (301 aa)) are pectinesterase 36. 2 residues coordinate substrate: Thr-283 and Gln-313. Residue Asp-336 is the Proton donor; for pectinesterase activity of the active site. Asp-357 functions as the Nucleophile; for pectinesterase activity in the catalytic mechanism. Residues Arg-425 and Trp-427 each coordinate substrate.

This sequence in the N-terminal section; belongs to the PMEI family. The protein in the C-terminal section; belongs to the pectinesterase family. Expressed in siliques.

It is found in the secreted. The protein localises to the cell wall. It catalyses the reaction [(1-&gt;4)-alpha-D-galacturonosyl methyl ester](n) + n H2O = [(1-&gt;4)-alpha-D-galacturonosyl](n) + n methanol + n H(+). It participates in glycan metabolism; pectin degradation; 2-dehydro-3-deoxy-D-gluconate from pectin: step 1/5. Its function is as follows. Acts in the modification of cell walls via demethylesterification of cell wall pectin. The polypeptide is Probable pectinesterase/pectinesterase inhibitor 36 (PME36) (Arabidopsis thaliana (Mouse-ear cress)).